A 547-amino-acid polypeptide reads, in one-letter code: Chaperonin GroEL (547 aa).

ATP contacts are provided by residues 30 to 33, Lys-51, 87 to 91, Gly-415, and Asp-496; these read TLGP and DGTTT.

Belongs to the chaperonin (HSP60) family. As to quaternary structure, forms a cylinder of 14 subunits composed of two heptameric rings stacked back-to-back. Interacts with the co-chaperonin GroES.

Its subcellular location is the cytoplasm. The enzyme catalyses ATP + H2O + a folded polypeptide = ADP + phosphate + an unfolded polypeptide.. In terms of biological role, together with its co-chaperonin GroES, plays an essential role in assisting protein folding. The GroEL-GroES system forms a nano-cage that allows encapsulation of the non-native substrate proteins and provides a physical environment optimized to promote and accelerate protein folding. This Pelodictyon phaeoclathratiforme (strain DSM 5477 / BU-1) protein is Chaperonin GroEL.